The following is a 1300-amino-acid chain: Kinesin-like protein KIN-4C (1300 aa).

A Kinesin motor domain is found at Cys-6–Ile-360. ATP is bound at residue Gly-85–Thr-92. Coiled-coil stretches lie at residues Thr-580–Ile-615, Gln-653–Lys-697, and Glu-781–Ser-823. Basic and acidic residues-rich tracts occupy residues Ala-956–Thr-971 and Glu-1001–Glu-1013. 4 disordered regions span residues Ala-956–Ile-1018, Asn-1097–Val-1132, Ala-1144–Trp-1187, and Pro-1200–Val-1300. Composition is skewed to polar residues over residues Ile-1169 to Arg-1180, Thr-1205 to Ser-1222, Asn-1230 to Ile-1239, and Gly-1275 to Arg-1288. Over residues Thr-1289–Val-1300 the composition is skewed to basic and acidic residues.

The protein belongs to the TRAFAC class myosin-kinesin ATPase superfamily. Kinesin family. KIN-4 subfamily. As to quaternary structure, homodimer.

In terms of biological role, kinesin-like motor protein involved in the control of the oriented deposition of cellulose microfibrils. This Arabidopsis thaliana (Mouse-ear cress) protein is Kinesin-like protein KIN-4C.